The following is a 194-amino-acid chain: MTENSTSTPAAKPKRAKAAKKSTDHPKYSDMIVAAIQAEKNRAGSSRQSIQKYIKSHYKVGENADSQIKLSIKRLVTTGVLKQTKGVGASGSFRLAKGDEPKRSVAFKKTKKEVKKVATPKKAAKPKKAASKAPSKKPKATPVKKAKKKPAATPKKAKKPKIVKVKPVKASKPKKAKPVKPKAKSSAKRASKKK.

An N-acetylmethionine modification is found at Met-1. The segment at 1–26 (MTENSTSTPAAKPKRAKAAKKSTDHP) is disordered. The residue at position 2 (Thr-2) is an N-acetylthreonine; in Histone H1.0, N-terminally processed. Residues 24-97 (DHPKYSDMIV…GASGSFRLAK (74 aa)) enclose the H15 domain. Residue Arg-42 is modified to Citrulline. The disordered stretch occupies residues 86–194 (GVGASGSFRL…SSAKRASKKK (109 aa)). The residue at position 104 (Ser-104) is an ADP-ribosylserine. Residues 105–194 (VAFKKTKKEV…SSAKRASKKK (90 aa)) show a composition bias toward basic residues.

It belongs to the histone H1/H5 family. ADP-ribosylated on Ser-104 in response to DNA damage.

The protein localises to the nucleus. It is found in the chromosome. Its function is as follows. Histones H1 are necessary for the condensation of nucleosome chains into higher-order structures. The histones H1.0 are found in cells that are in terminal stages of differentiation or that have low rates of cell division. This is Histone H1.0 (H1-0) from Rattus norvegicus (Rat).